A 142-amino-acid chain; its full sequence is Transcription antitermination protein NusB (142 aa).

It belongs to the NusB family.

Its function is as follows. Involved in transcription antitermination. Required for transcription of ribosomal RNA (rRNA) genes. Binds specifically to the boxA antiterminator sequence of the ribosomal RNA (rrn) operons. This chain is Transcription antitermination protein NusB, found in Borrelia garinii subsp. bavariensis (strain ATCC BAA-2496 / DSM 23469 / PBi) (Borreliella bavariensis).